The primary structure comprises 455 residues: Adenylyltransferase and sulfurtransferase MOCS3 (455 aa).

ATP contacts are provided by residues Gly-90, Asp-111, 118-122 (SNLAR), Lys-135, and 179-180 (DN). Residues 156 to 236 (AQALTPATAL…QPPPAETVTN (81 aa)) form an interaction with NFS1 region. Positions 220 and 223 each coordinate Zn(2+). Cys-237 serves as the catalytic Glycyl thioester intermediate; for adenylyltransferase activity. Zn(2+)-binding residues include Cys-295 and Cys-298. A disulfide bridge links Cys-314 with Cys-322. Residues 345 to 453 (SGSPHLLLDV…WAAKVDGTFP (109 aa)) enclose the Rhodanese domain. Residue Cys-410 is the Cysteine persulfide intermediate; for sulfurtransferase activity of the active site. A Cysteine persulfide modification is found at Cys-410.

It in the N-terminal section; belongs to the HesA/MoeB/ThiF family. UBA4 subfamily. Interacts with NFS1. Zn(2+) is required as a cofactor.

Its subcellular location is the cytoplasm. It localises to the cytosol. The enzyme catalyses [molybdopterin-synthase sulfur-carrier protein]-C-terminal Gly-Gly + ATP + H(+) = [molybdopterin-synthase sulfur-carrier protein]-C-terminal Gly-Gly-AMP + diphosphate. It carries out the reaction [molybdopterin-synthase sulfur-carrier protein]-C-terminal Gly-Gly-AMP + S-sulfanyl-L-cysteinyl-[cysteine desulfurase] + AH2 = [molybdopterin-synthase sulfur-carrier protein]-C-terminal-Gly-aminoethanethioate + L-cysteinyl-[cysteine desulfurase] + A + AMP + 2 H(+). The protein operates within tRNA modification; 5-methoxycarbonylmethyl-2-thiouridine-tRNA biosynthesis. It participates in cofactor biosynthesis; molybdopterin biosynthesis. Plays a central role in 2-thiolation of mcm(5)S(2)U at tRNA wobble positions of cytosolic tRNA(Lys), tRNA(Glu) and tRNA(Gln). Also essential during biosynthesis of the molybdenum cofactor. Acts by mediating the C-terminal thiocarboxylation of sulfur carriers URM1 and MOCS2A. Its N-terminus first activates URM1 and MOCS2A as acyl-adenylates (-COAMP), then the persulfide sulfur on the catalytic cysteine is transferred to URM1 and MOCS2A to form thiocarboxylation (-COSH) of their C-terminus. The reaction probably involves hydrogen sulfide that is generated from the persulfide intermediate and that acts as a nucleophile towards URM1 and MOCS2A. Subsequently, a transient disulfide bond is formed. Does not use thiosulfate as sulfur donor; NFS1 acting as a sulfur donor for thiocarboxylation reactions. The chain is Adenylyltransferase and sulfurtransferase MOCS3 from Sus scrofa (Pig).